The following is a 132-amino-acid chain: Small ribosomal subunit protein uS11 (132 aa).

The interval 108 to 132 is disordered; that stretch reads GRIEDVTPVPHDSCRPKGGRRGRRV.

Belongs to the universal ribosomal protein uS11 family. As to quaternary structure, part of the 30S ribosomal subunit.

Functionally, located on the platform of the 30S subunit. This is Small ribosomal subunit protein uS11 from Methanoregula boonei (strain DSM 21154 / JCM 14090 / 6A8).